A 279-amino-acid chain; its full sequence is Zinc finger AN1 and C2H2 domain-containing stress-associated protein 11 (279 aa).

2 AN1-type zinc fingers span residues 7-55 and 95-145; these read PDLG…REDV and ATKK…KLPF. Zn(2+) is bound by residues Cys-13, Cys-18, Cys-28, Cys-31, Cys-36, His-39, His-45, Cys-47, Cys-101, Cys-106, Cys-118, Cys-121, Cys-126, His-129, His-135, and Cys-137. The disordered stretch occupies residues 152 to 178; that stretch reads STTRKEAKTTRPNKAHPSTSSSSSSSR. Over residues 169-178 the composition is skewed to low complexity; that stretch reads STSSSSSSSR. 2 consecutive C2H2-type zinc fingers follow at residues 213-236 and 250-273; these read EVCP…EKTH and DVCP…ERDH.

In terms of biological role, may be involved in environmental stress response. This is Zinc finger AN1 and C2H2 domain-containing stress-associated protein 11 (SAP11) from Arabidopsis thaliana (Mouse-ear cress).